The following is a 250-amino-acid chain: Cruxrhodopsin-1 (250 aa).

The Extracellular portion of the chain corresponds to 1 to 9 (MPEPGSEAI). The helical transmembrane segment at 10-27 (WLWLGTAGMFLGMLYFIA) threads the bilayer. At 28-41 (RGWGETDSRRQKFY) the chain is on the cytoplasmic side. The helical transmembrane segment at 42–60 (IATILITAIAFVNYLAMAL) threads the bilayer. Over 61–77 (GFGLTIVEFAGEEHPIY) the chain is Extracellular. A helical transmembrane segment spans residues 78 to 94 (WARYSDWLFTTPLLLYD). Residues 95 to 105 (LGLLAGADRNT) lie on the Cytoplasmic side of the membrane. The chain crosses the membrane as a helical span at residues 106 to 125 (ITSLVSLDVLMIGTGLVATL). At 126–138 (SPGSGVLSAGAER) the chain is on the extracellular side. Residues 139 to 158 (LVWWGISTAFLLVLLYFLFS) form a helical membrane-spanning segment. Over 159 to 176 (SLSGRVADLPSDTRSTFK) the chain is Cytoplasmic. Residues 177–195 (TLRNLVTVVWLVYPVWWLI) form a helical membrane-spanning segment. At 196–207 (GTEGIGLVGIGI) the chain is on the extracellular side. A helical membrane pass occupies residues 208–227 (ETAGFMVIDLTAKVGFGIIL). At lysine 220 the chain carries N6-(retinylidene)lysine. The Cytoplasmic portion of the chain corresponds to 228–250 (LRSHGVLDGAAETTGTGATPADD).

The protein belongs to the archaeal/bacterial/fungal opsin family. In terms of assembly, homotrimer.

It localises to the cell membrane. Light-driven proton pump. In Haloarcula argentinensis, this protein is Cruxrhodopsin-1 (cop1).